The chain runs to 282 residues: 4-hydroxybenzoate octaprenyltransferase (282 aa).

Transmembrane regions (helical) follow at residues 17–37 (IGIL…NQGF), 40–60 (IDLL…GCVI), 90–110 (AFIL…KLPI), 113–133 (FYFA…KRFL), 135–155 (APQL…FIAS), 163–183 (FVVL…MYAM), 207–227 (LIIA…AINK), 231–251 (WFFY…LKLI), and 262–282 (AFLV…LALI).

Belongs to the UbiA prenyltransferase family. Requires Mg(2+) as cofactor.

The protein localises to the cell inner membrane. The catalysed reaction is all-trans-octaprenyl diphosphate + 4-hydroxybenzoate = 4-hydroxy-3-(all-trans-octaprenyl)benzoate + diphosphate. The protein operates within cofactor biosynthesis; ubiquinone biosynthesis. In terms of biological role, catalyzes the prenylation of para-hydroxybenzoate (PHB) with an all-trans polyprenyl group. Mediates the second step in the final reaction sequence of ubiquinone-8 (UQ-8) biosynthesis, which is the condensation of the polyisoprenoid side chain with PHB, generating the first membrane-bound Q intermediate 3-octaprenyl-4-hydroxybenzoate. This Legionella pneumophila (strain Paris) protein is 4-hydroxybenzoate octaprenyltransferase.